Reading from the N-terminus, the 354-residue chain is Ferrochelatase (354 aa).

2 residues coordinate Fe cation: H191 and E271.

This sequence belongs to the ferrochelatase family.

The protein resides in the cytoplasm. It carries out the reaction heme b + 2 H(+) = protoporphyrin IX + Fe(2+). It participates in porphyrin-containing compound metabolism; protoheme biosynthesis; protoheme from protoporphyrin-IX: step 1/1. Its function is as follows. Catalyzes the ferrous insertion into protoporphyrin IX. This Rickettsia bellii (strain OSU 85-389) protein is Ferrochelatase.